Reading from the N-terminus, the 54-residue chain is Putative neurotoxin-I (54 aa).

3 disulfide bridges follow: Cys-20/Cys-42, Cys-28/Cys-51, and Cys-32/Cys-53.

As to expression, expressed by the venom gland.

It localises to the secreted. The polypeptide is Putative neurotoxin-I (Lychas mucronatus (Chinese swimming scorpion)).